Consider the following 217-residue polypeptide: Histone H1-gamma, late (217 aa).

2 disordered regions span residues 1–21 and 80–217; these read MSAAKPKVAKKARVAPAHPPS and GKGA…PAKK. Residues 17 to 91 form the H15 domain; sequence AHPPSSQMVV…GASGSFKLGK (75 aa). A compositionally biased stretch (basic residues) spans 104 to 113; sequence IAAKKAKLAA. Residues 114–123 are compositionally biased toward basic and acidic residues; the sequence is KKKEQREKKA. Positions 124–217 are enriched in basic residues; that stretch reads LKTKARKEKV…AKKAAKPAKK (94 aa).

Belongs to the histone H1/H5 family.

It is found in the nucleus. It localises to the chromosome. In terms of biological role, histones H1 are necessary for the condensation of nucleosome chains into higher-order structures. The sequence is that of Histone H1-gamma, late from Strongylocentrotus purpuratus (Purple sea urchin).